The following is a 90-amino-acid chain: Small ribosomal subunit protein uS15c (90 aa).

This sequence belongs to the universal ribosomal protein uS15 family. Part of the 30S ribosomal subunit.

It is found in the plastid. Its subcellular location is the chloroplast. This is Small ribosomal subunit protein uS15c (rps15) from Populus alba (White poplar).